The primary structure comprises 183 residues: MSPDRFPGWPHWLPIAAQRPRMSPDWWPWVASRDSLTARLRIASPRPFSVRLLTQGVTRPRLDEAQALGLPHRTHVWHREVLLRLGNASWVAARSVAPLEGLSGARLCTLGERSLGSWLFRQPNLERGPIEAIRAPAMTGLDAWRGDAGPWGRRSLLRVGRTRILVQEFFLAAMAADLSLPSR.

Residues Arg79, Leu115, and Glu168 each coordinate substrate.

It belongs to the UbiC family.

The protein resides in the cytoplasm. It catalyses the reaction chorismate = 4-hydroxybenzoate + pyruvate. Its pathway is cofactor biosynthesis; ubiquinone biosynthesis. Its function is as follows. Removes the pyruvyl group from chorismate, with concomitant aromatization of the ring, to provide 4-hydroxybenzoate (4HB) for the ubiquinone pathway. In Chromohalobacter salexigens (strain ATCC BAA-138 / DSM 3043 / CIP 106854 / NCIMB 13768 / 1H11), this protein is Probable chorismate pyruvate-lyase.